The primary structure comprises 332 residues: Homoarginine-6-hydroxylase 2-ODD-C23.1 (332 aa).

Residues 182 to 287 (PFWVMRLIGY…RVCVAFFYET (106 aa)) enclose the Fe2OG dioxygenase domain. The Fe cation site is built by His210, Asp212, and His268. Residue Arg278 participates in 2-oxoglutarate binding.

Belongs to the iron/ascorbate-dependent oxidoreductase family. The cofactor is Fe(2+).

Its subcellular location is the cytoplasm. It localises to the cytosol. The catalysed reaction is L-homoarginine + 2-oxoglutarate + O2 = 6-hydroxy-L-homoarginine + succinate + CO2. Its activity is regulated as follows. Slightly inhibited by canavanine (Can), the 5-oxa-analog of arginine. Its function is as follows. 2-oxoglutarate-dependent dioxygenase catalyzing homoarginine 6-hydroxylation thus producing 6-hydroxy-L-homoarginine. Guanidine (Gd) is in turn synthesized by the spontaneous conversion of 6-hydroxy-L-homoarginine to (S)-2-amino-6-oxohexanoate (RHEA:79843); guanidine is a nitrogen-rich compound that can serve as a defense or signaling substance. This is Homoarginine-6-hydroxylase 2-ODD-C23.1 from Arabidopsis thaliana (Mouse-ear cress).